A 108-amino-acid chain; its full sequence is Large ribosomal subunit protein eL36x (108 aa).

Disordered regions lie at residues 13–34 and 75–108; these read GHVV…KTSK and KLGT…EKKK. The span at 75–84 shows a compositional bias: basic residues; it reads KLGTHKRAKR.

It belongs to the eukaryotic ribosomal protein eL36 family.

The polypeptide is Large ribosomal subunit protein eL36x (RPL36C) (Arabidopsis thaliana (Mouse-ear cress)).